The sequence spans 249 residues: Small ribosomal subunit protein uS3 (249 aa).

The region spanning isoleucine 38–lysine 106 is the KH type-2 domain. Basic and acidic residues predominate over residues alanine 218–arginine 233. Residues alanine 218 to glycine 249 form a disordered region.

The protein belongs to the universal ribosomal protein uS3 family. In terms of assembly, part of the 30S ribosomal subunit. Forms a tight complex with proteins S10 and S14.

Binds the lower part of the 30S subunit head. Binds mRNA in the 70S ribosome, positioning it for translation. This chain is Small ribosomal subunit protein uS3, found in Corynebacterium kroppenstedtii (strain DSM 44385 / JCM 11950 / CIP 105744 / CCUG 35717).